Here is a 380-residue protein sequence, read N- to C-terminus: Cytochrome b (380 aa).

The next 4 helical transmembrane spans lie at 34–54 (FGSLLGICLVTQIVTGLLLAM), 78–99 (WLIRNLHANGASFFFICIYLHI), 114–134 (WNVGVILLLTLMATAFVGYVL), and 179–199 (FFALHFLLPFVIAGLTLVHLT). Heme b contacts are provided by H84 and H98. 2 residues coordinate heme b: H183 and H197. H202 contributes to the a ubiquinone binding site. The next 4 helical transmembrane spans lie at 227–247 (IKDILGFALMLASLVALALFS), 289–309 (LGGVLALAASILVLFLMPLLH), 321–341 (LSQILFWVLVTNVLILTWIGS), and 348–368 (FIIIGQLASLSYFTIILVLFP).

Belongs to the cytochrome b family. The cytochrome bc1 complex contains 11 subunits: 3 respiratory subunits (MT-CYB, CYC1 and UQCRFS1), 2 core proteins (UQCRC1 and UQCRC2) and 6 low-molecular weight proteins (UQCRH/QCR6, UQCRB/QCR7, UQCRQ/QCR8, UQCR10/QCR9, UQCR11/QCR10 and a cleavage product of UQCRFS1). This cytochrome bc1 complex then forms a dimer. Heme b serves as cofactor.

Its subcellular location is the mitochondrion inner membrane. Component of the ubiquinol-cytochrome c reductase complex (complex III or cytochrome b-c1 complex) that is part of the mitochondrial respiratory chain. The b-c1 complex mediates electron transfer from ubiquinol to cytochrome c. Contributes to the generation of a proton gradient across the mitochondrial membrane that is then used for ATP synthesis. The protein is Cytochrome b (MT-CYB) of Vireo olivaceus (Red-eyed vireo).